A 152-amino-acid polypeptide reads, in one-letter code: MTVAISAAVQQLPHGQGLALPAYQSAHAAGLDLLAAVAPDAPLVLAPGTYALVPTGLTLALPPGYEAQVRPRSGLAARHGVTVLNAPGTIDADYRGEIGVLLINHGSQPFTVRRGERIAQMVVARVARVDLTVAASLETTERGSGGFGSTGR.

Substrate-binding positions include 72–74 (RSG), N85, and 89–91 (TID).

This sequence belongs to the dUTPase family. It depends on Mg(2+) as a cofactor.

It carries out the reaction dUTP + H2O = dUMP + diphosphate + H(+). Its pathway is pyrimidine metabolism; dUMP biosynthesis; dUMP from dCTP (dUTP route): step 2/2. Its function is as follows. This enzyme is involved in nucleotide metabolism: it produces dUMP, the immediate precursor of thymidine nucleotides and it decreases the intracellular concentration of dUTP so that uracil cannot be incorporated into DNA. This Rhodopseudomonas palustris (strain BisB18) protein is Deoxyuridine 5'-triphosphate nucleotidohydrolase.